Consider the following 883-residue polypeptide: MNEQYSALRSNVSMLGKVLGETIKDALGEHILERVETIRKLSKSSRAGNDANRQELLTTLQNLSNDELLPVARAFSQFLNLANTAEQYHSISPKGEAASNPEVIARTLRKLKNQPELSEDTIKKAVESLSLELVLTAHPTEITRRTLIHKMVEVNACLKQLDNKDIADYEHNQLMRRLRQLIAQSWHTDEIRKLRPSPVDEAKWGFAVVENSLWQGVPNYLRELNEQLEENLGYKLPVEFVPVRFTSWMGGDRDGNPNVTADITRHVLLLSRWKATDLFLKDIQVLVSELSMVEATPELLALVGEEGAAEPYRYLMKNLRSRLMATQAWLEARLKGEELPKPEGLLTQNEELWEPLYACYQSLQACGMGIIANGDLLDTLRRVKCFGVPLVRIDIRQESTRHTEALGELTRYLGIGDYESWSEADKQAFLIRELNSKRPLLPRNWQPSAETREVLDTCQVIAEAPQGSIAAYVISMAKTPSDVLAVHLLLKEAGIGFAMPVAPLFETLDDLNNANDVMTQLLNIDWYRGLIQGKQMVMIGYSDSAKDAGVMAASWAQYQAQDALIKTCEKAGIELTLFHGRGGSIGRGGAPAHAALLSQPPGSLKGGLRVTEQGEMIRFKYGLPEITVSSLSLYTGAILEANLLPPPEPKESWRRIMDELSVISCDVYRGYVRENKDFVPYFRSATPEQELGKLPLGSRPAKRRPTGGVESLRAIPWIFAWTQNRLMLPAWLGAGTALQKVVEDGKQNELEAMCRDWPFFSTRLGMLEMVFAKADLWLAEYYDQRLVDKALWPLGKELRNLQEEDIKVVLAIANDSHLMADLPWIAESIQLRNIYTDPLNVLQAELLHRSRQAEKEGQEPDPRVEQALMVTIAGIAAGMRNTG.

Active-site residues include His-138 and Lys-546.

The protein belongs to the PEPCase type 1 family. The cofactor is Mg(2+).

It carries out the reaction oxaloacetate + phosphate = phosphoenolpyruvate + hydrogencarbonate. Forms oxaloacetate, a four-carbon dicarboxylic acid source for the tricarboxylic acid cycle. The sequence is that of Phosphoenolpyruvate carboxylase from Escherichia coli O45:K1 (strain S88 / ExPEC).